We begin with the raw amino-acid sequence, 81 residues long: UPF0248 protein TK0315 (81 aa).

This sequence belongs to the UPF0248 family.

This is UPF0248 protein TK0315 from Thermococcus kodakarensis (strain ATCC BAA-918 / JCM 12380 / KOD1) (Pyrococcus kodakaraensis (strain KOD1)).